The sequence spans 46 residues: Bottromycin D (46 aa).

The propeptide occupies methionine 10–valine 46.

Post-translationally, the precursor peptide is first ribosomally synthesized and then highly tailored by specific enzymes to yield the final natural product. These modifications include several methylations, cyclization and the formation of t-Leu and Thia-beta-Ala residues.

It localises to the secreted. Its function is as follows. Bottromycin D is a ribosomally synthesized and post-translationally modified peptide (RiPP) that displays antibiotic activity against methicillin-resistant S.aureus (MRSA). The sequence is that of Bottromycin D from Streptomyces sp.